A 504-amino-acid polypeptide reads, in one-letter code: GTPase Der (504 aa).

The EngA-type G 1 domain occupies 4 to 168; it reads PVVALVGRPN…QVLAPFAEKM (165 aa). GTP is bound by residues 10–17, 57–61, and 120–123; these read GRPNVGKS, DTGGI, and NKTD. Basic and acidic residues predominate over residues 168–179; the sequence is MENADENDRTSE. The segment at 168 to 191 is disordered; sequence MENADENDRTSEEEQDEWEQEFDF. Residues 180-191 are compositionally biased toward acidic residues; that stretch reads EEQDEWEQEFDF. The EngA-type G 2 domain occupies 216-389; it reads IKIAIVGRPN…SIKEAYACAT (174 aa). GTP-binding positions include 222 to 229, 269 to 273, and 334 to 337; these read GRPNVGKS, DTAGV, and NKWD. In terms of domain architecture, KH-like spans 390–474; it reads QKMTTSLLTR…PIRLLFQEGS (85 aa).

The protein belongs to the TRAFAC class TrmE-Era-EngA-EngB-Septin-like GTPase superfamily. EngA (Der) GTPase family. Associates with the 50S ribosomal subunit.

In terms of biological role, GTPase that plays an essential role in the late steps of ribosome biogenesis. This Haemophilus influenzae (strain ATCC 51907 / DSM 11121 / KW20 / Rd) protein is GTPase Der.